The chain runs to 451 residues: Signal recognition particle 54 kDa protein (451 aa).

Residues 105–112 (GVQGTGKT), 187–191 (DTAGR), and 247–250 (TKMD) contribute to the GTP site.

Belongs to the GTP-binding SRP family. SRP54 subfamily. In terms of assembly, part of the signal recognition particle protein translocation system, which is composed of SRP and FtsY. Archaeal SRP consists of a 7S RNA molecule of 300 nucleotides and two protein subunits: SRP54 and SRP19.

Its subcellular location is the cytoplasm. It catalyses the reaction GTP + H2O = GDP + phosphate + H(+). Its function is as follows. Involved in targeting and insertion of nascent membrane proteins into the cytoplasmic membrane. Binds to the hydrophobic signal sequence of the ribosome-nascent chain (RNC) as it emerges from the ribosomes. The SRP-RNC complex is then targeted to the cytoplasmic membrane where it interacts with the SRP receptor FtsY. The protein is Signal recognition particle 54 kDa protein of Acidianus ambivalens (Desulfurolobus ambivalens).